The primary structure comprises 95 residues: Large ribosomal subunit protein bL25 (95 aa).

This sequence belongs to the bacterial ribosomal protein bL25 family. Part of the 50S ribosomal subunit; part of the 5S rRNA/L5/L18/L25 subcomplex. Contacts the 5S rRNA. Binds to the 5S rRNA independently of L5 and L18.

This is one of the proteins that binds to the 5S RNA in the ribosome where it forms part of the central protuberance. In Haemophilus influenzae (strain 86-028NP), this protein is Large ribosomal subunit protein bL25.